We begin with the raw amino-acid sequence, 100 residues long: uncharacterized protein (100 aa).

Lys98 participates in a covalent cross-link: Isoglutamyl lysine isopeptide (Lys-Gln) (interchain with Q-Cter in protein Pup).

This is an uncharacterized protein from Mycobacterium tuberculosis (strain CDC 1551 / Oshkosh).